Here is a 284-residue protein sequence, read N- to C-terminus: Pantothenate synthetase (284 aa).

30–37 (MGALHDGH) is an ATP binding site. Catalysis depends on His37, which acts as the Proton donor. (R)-pantoate is bound at residue Gln61. Residue Gln61 coordinates beta-alanine. ATP is bound at residue 147–150 (GEKD). Gln153 provides a ligand contact to (R)-pantoate. ATP is bound by residues Val176 and 184 to 187 (KSSR).

The protein belongs to the pantothenate synthetase family. As to quaternary structure, homodimer.

Its subcellular location is the cytoplasm. The enzyme catalyses (R)-pantoate + beta-alanine + ATP = (R)-pantothenate + AMP + diphosphate + H(+). It functions in the pathway cofactor biosynthesis; (R)-pantothenate biosynthesis; (R)-pantothenate from (R)-pantoate and beta-alanine: step 1/1. In terms of biological role, catalyzes the condensation of pantoate with beta-alanine in an ATP-dependent reaction via a pantoyl-adenylate intermediate. This Chloroherpeton thalassium (strain ATCC 35110 / GB-78) protein is Pantothenate synthetase.